A 158-amino-acid chain; its full sequence is Cyclic pyranopterin monophosphate synthase (158 aa).

Substrate-binding positions include 75-77 and 113-114; these read LCH and ME. The active site involves Asp-128.

It belongs to the MoaC family. Homohexamer; trimer of dimers.

It catalyses the reaction (8S)-3',8-cyclo-7,8-dihydroguanosine 5'-triphosphate = cyclic pyranopterin phosphate + diphosphate. The protein operates within cofactor biosynthesis; molybdopterin biosynthesis. Functionally, catalyzes the conversion of (8S)-3',8-cyclo-7,8-dihydroguanosine 5'-triphosphate to cyclic pyranopterin monophosphate (cPMP). In Actinobacillus succinogenes (strain ATCC 55618 / DSM 22257 / CCUG 43843 / 130Z), this protein is Cyclic pyranopterin monophosphate synthase.